The sequence spans 455 residues: Ribosomal protein uS12 methylthiotransferase RimO (455 aa).

In terms of domain architecture, MTTase N-terminal spans 1 to 114 (MKYHIVTLGC…INALVGQLER (114 aa)). [4Fe-4S] cluster contacts are provided by Cys-10, Cys-46, Cys-78, Cys-166, Cys-170, and Cys-173. The region spanning 152 to 383 (THQTPSAYLK…MRLQQTISYT (232 aa)) is the Radical SAM core domain. A TRAM domain is found at 386–455 (QRWVGRTIKV…AYDLWGEALS (70 aa)).

The protein belongs to the methylthiotransferase family. RimO subfamily. [4Fe-4S] cluster is required as a cofactor.

It localises to the cytoplasm. The catalysed reaction is L-aspartate(89)-[ribosomal protein uS12]-hydrogen + (sulfur carrier)-SH + AH2 + 2 S-adenosyl-L-methionine = 3-methylsulfanyl-L-aspartate(89)-[ribosomal protein uS12]-hydrogen + (sulfur carrier)-H + 5'-deoxyadenosine + L-methionine + A + S-adenosyl-L-homocysteine + 2 H(+). Catalyzes the methylthiolation of an aspartic acid residue of ribosomal protein uS12. The chain is Ribosomal protein uS12 methylthiotransferase RimO from Chloroflexus aurantiacus (strain ATCC 29366 / DSM 635 / J-10-fl).